Reading from the N-terminus, the 256-residue chain is Cell division protein DivIB (256 aa).

Topologically, residues 1–30 are cytoplasmic; the sequence is MNNSKVIKLQDRVPKLKNQKKKNKKNVNHR. The chain crosses the membrane as a helical span at residues 31-51; that stretch reads LILYISILFLLVLFLIYFRSP. Over 52–256 the chain is Extracellular; it reads LSNIKKISVF…KELGAEEKKE (205 aa). The region spanning 53–121 is the POTRA domain; the sequence is SNIKKISVFG…NNIDIHIEEY (69 aa).

It belongs to the FtsQ/DivIB family. DivIB subfamily.

It localises to the cell membrane. Cell division protein that may be involved in stabilizing or promoting the assembly of the division complex. The sequence is that of Cell division protein DivIB from Bacillus cereus (strain ATCC 14579 / DSM 31 / CCUG 7414 / JCM 2152 / NBRC 15305 / NCIMB 9373 / NCTC 2599 / NRRL B-3711).